The chain runs to 508 residues: Methionine--tRNA ligase (508 aa).

Residues 12-22 (YYVNDIPHIGH) carry the 'HIGH' region motif. The short motif at 295-299 (KISKS) is the 'KMSKS' region element. Lys298 provides a ligand contact to ATP.

It belongs to the class-I aminoacyl-tRNA synthetase family. MetG type 2B subfamily. Monomer.

The protein resides in the cytoplasm. The catalysed reaction is tRNA(Met) + L-methionine + ATP = L-methionyl-tRNA(Met) + AMP + diphosphate. Functionally, is required not only for elongation of protein synthesis but also for the initiation of all mRNA translation through initiator tRNA(fMet) aminoacylation. In Rickettsia conorii (strain ATCC VR-613 / Malish 7), this protein is Methionine--tRNA ligase.